We begin with the raw amino-acid sequence, 2670 residues long: Inositol 1,4,5-trisphosphate-gated calcium channel ITPR3 (2670 aa).

The Cytoplasmic portion of the chain corresponds to 1–2201 (MNEMSSFLHI…LIYWFSRRMT (2201 aa)). 5 MIR domains span residues 113-173 (GDVV…LRSN), 174-224 (GDNV…INLF), 232-288 (EEVL…VEVV), 295-372 (GGAG…LDPT), and 378-434 (DSFV…IVSV). 1D-myo-inositol 1,4,5-trisphosphate is bound by residues Arg266, Thr268, Leu269, and Arg270. The segment at 321–344 (PSYKGDVSDPKAAGPGAQSRTGRR) is disordered. 1D-myo-inositol 1,4,5-trisphosphate contacts are provided by Arg503, Lys507, Arg510, Tyr567, Arg568, and Lys569. Arg743 provides a ligand contact to Ca(2+). Phosphoserine occurs at positions 916 and 934. Glu1122 and Glu1125 together coordinate Ca(2+). The segment covering 1134 to 1153 (VKGEEGEAGASKDKKERPSD) has biased composition (basic and acidic residues). Disordered stretches follow at residues 1134 to 1164 (VKGE…HGEK) and 1807 to 1849 (NMSD…GLHR). 3 positions are modified to phosphoserine: Ser1813, Ser1832, and Ser1834. Over residues 1831-1842 (SSFSMPSSSRYS) the composition is skewed to low complexity. Residues Glu1881 and Glu1945 each contribute to the Ca(2+) site. Residues Ala1995, Glu2148, and Lys2151 each contribute to the ATP site. Residues 2202-2222 (LWGSISFNLAVFINIIIAFFY) form a helical membrane-spanning segment. Residues 2223-2233 (PYVEGASTGVL) lie on the Extracellular side of the membrane. The helical transmembrane segment at 2234-2254 (GSPLISLLFWILICFSIAALF) threads the bilayer. Over 2255–2263 (TKHYSVRPL) the chain is Cytoplasmic. Residues 2264–2284 (IVALVLRSIYYLGIGPTLNIL) traverse the membrane as a helical segment. Residues 2285 to 2324 (GALNLTNKIVFVVSFVGNRGTFIRGYKAMVMDMEFLYHVG) lie on the Extracellular side of the membrane. The chain crosses the membrane as a helical span at residues 2325–2345 (YILTSVLGLFAHELFYSILLF). Residues 2346–2367 (DLIYREETLFNVIKSVTRNGRS) are Cytoplasmic-facing. Residues 2368–2388 (ILLTALLALILVYLFSIVGFL) traverse the membrane as a helical segment. At 2389-2495 (FLKDDFILEV…ESLFPARVVY (107 aa)) the chain is on the extracellular side. An intrachain disulfide couples Cys2454 to Cys2460. The helical transmembrane segment at 2496 to 2516 (DLLFFFIVIIIVLNLIFGVII) threads the bilayer. The Cytoplasmic segment spans residues 2517 to 2670 (DTFADLRSEK…FVDVQNCMSR (154 aa)). The ATP site is built by Cys2537 and Phe2538. Cys2537 is a Zn(2+) binding site. Zn(2+) contacts are provided by Cys2540 and His2557. Positions 2559, 2562, 2563, and 2564 each coordinate ATP. His2562 serves as a coordination point for Zn(2+). Thr2580 contributes to the Ca(2+) binding site. Phosphoserine is present on residues Ser2608 and Ser2669.

The protein belongs to the InsP3 receptor family. In terms of assembly, homotetramer. Homodimer. Interacts with TRPC1 and TRPC3. Interacts with TRPC4. Interacts with TRPV4. Interacts with SIGMAR1. Interacts with AKT1 and PML. Interacts with IRAG2 (via coiled-coil domain). Interacts with CABP1. Interacts with TMBIM4/LFG4. Interacts with CEMIP. Interacts with TESPA1. Interacts with TMEM203. Interacts with BOK; regulates ITPR3 expression. Interacts with BCL2L10. Interacts with CHGA and CHGB. In terms of processing, phosphorylated by AKT1 on serine and/or threonine residues.

The protein localises to the endoplasmic reticulum membrane. It is found in the cytoplasmic vesicle. The protein resides in the secretory vesicle membrane. It carries out the reaction Ca(2+)(in) = Ca(2+)(out). Its activity is regulated as follows. Inositol 1,4,5-trisphosphate-gated calcium channel is regulated by cytosolic calcium in a biphasic manner. At low concentrations, cytosolic calcium binds at a high-affinity juxtamembrane domain (JD) calcium binding site, allowing ITPR3 to activate by escaping a low-energy resting state through an ensemble of preactivated states. At high cytosolic calcium concentrations, ITPR3 preferentially enters an inhibited state stabilized by calcium binding at a second, low-affinity cytoplasmic domain (CD) calcium binding site. Its function is as follows. Inositol 1,4,5-trisphosphate-gated calcium channel that, upon 1D-myo-inositol 1,4,5-trisphosphate binding, transports calcium from the endoplasmic reticulum lumen to cytoplasm, thus releasing the intracellular calcium and therefore participates in cellular calcium ion homeostasis. 11D-myo-inositol 1,4,5-trisphosphate binds to the ligand-free channel without altering its global conformation, yielding the low-energy resting state, then progresses through resting-to preactivated transitions to the higher energy preactivated state, which increases affinity for calcium, promoting binding of the low basal cytosolic calcium at the juxtamembrane domain (JD) site, favoring the transition through the ensemble of high-energy intermediate states along the trajectory to the fully-open activated state. Upon opening, releases calcium in the cytosol where it can bind to the low-affinity cytoplasmic domain (CD) site and stabilizes the inhibited state to terminate calcium release. The protein is Inositol 1,4,5-trisphosphate-gated calcium channel ITPR3 of Rattus norvegicus (Rat).